Reading from the N-terminus, the 548-residue chain is BTB/POZ domain-containing protein At5g17580 (548 aa).

The BTB domain maps to Ser-7–Ser-74. Residues Asp-180–Gln-442 form the NPH3 domain. Residue Tyr-383 is modified to Phosphotyrosine. Residues Gln-442–Val-493 are a coiled coil.

It belongs to the NPH3 family.

Its pathway is protein modification; protein ubiquitination. Its function is as follows. May act as a substrate-specific adapter of an E3 ubiquitin-protein ligase complex (CUL3-RBX1-BTB) which mediates the ubiquitination and subsequent proteasomal degradation of target proteins. The chain is BTB/POZ domain-containing protein At5g17580 from Arabidopsis thaliana (Mouse-ear cress).